The primary structure comprises 73 residues: Small ribosomal subunit protein uS15c (73 aa).

Belongs to the universal ribosomal protein uS15 family. In terms of assembly, part of the 30S ribosomal subunit.

It localises to the plastid. It is found in the chloroplast. The polypeptide is Small ribosomal subunit protein uS15c (rps15) (Welwitschia mirabilis (Tree tumbo)).